The primary structure comprises 156 residues: Ribosome maturation factor RimP (156 aa).

Belongs to the RimP family.

It is found in the cytoplasm. Required for maturation of 30S ribosomal subunits. The sequence is that of Ribosome maturation factor RimP from Halalkalibacterium halodurans (strain ATCC BAA-125 / DSM 18197 / FERM 7344 / JCM 9153 / C-125) (Bacillus halodurans).